A 432-amino-acid polypeptide reads, in one-letter code: Tol-Pal system protein TolB (432 aa).

A signal peptide spans 1–24; the sequence is MKLVTRMWSILIVFFLAVLQPAQA.

Belongs to the TolB family. In terms of assembly, the Tol-Pal system is composed of five core proteins: the inner membrane proteins TolA, TolQ and TolR, the periplasmic protein TolB and the outer membrane protein Pal. They form a network linking the inner and outer membranes and the peptidoglycan layer.

The protein localises to the periplasm. Functionally, part of the Tol-Pal system, which plays a role in outer membrane invagination during cell division and is important for maintaining outer membrane integrity. The protein is Tol-Pal system protein TolB of Pasteurella multocida (strain Pm70).